The following is a 1113-amino-acid chain: uncharacterized protein (1113 aa).

313–320 contacts ATP; sequence GPPGTGKS.

It belongs to the DNA2/NAM7 helicase family.

This is an uncharacterized protein from Mycoplasma pneumoniae (strain ATCC 29342 / M129 / Subtype 1) (Mycoplasmoides pneumoniae).